The sequence spans 88 residues: uncharacterized protein (88 aa).

This is an uncharacterized protein from Haloarcula hispanica (His1V).